We begin with the raw amino-acid sequence, 585 residues long: Aspartate--tRNA(Asp/Asn) ligase (585 aa).

Position 175 (E175) interacts with L-aspartate. Residues 199–202 form an aspartate region; sequence QLFK. Position 221 (R221) interacts with L-aspartate. Residues 221 to 223 and Q230 contribute to the ATP site; that span reads RDE. H448 is an L-aspartate binding site. E482 contacts ATP. Residue R489 participates in L-aspartate binding. 534–537 contributes to the ATP binding site; sequence GLDR.

It belongs to the class-II aminoacyl-tRNA synthetase family. Type 1 subfamily. As to quaternary structure, homodimer.

The protein localises to the cytoplasm. It catalyses the reaction tRNA(Asx) + L-aspartate + ATP = L-aspartyl-tRNA(Asx) + AMP + diphosphate. In terms of biological role, aspartyl-tRNA synthetase with relaxed tRNA specificity since it is able to aspartylate not only its cognate tRNA(Asp) but also tRNA(Asn). Reaction proceeds in two steps: L-aspartate is first activated by ATP to form Asp-AMP and then transferred to the acceptor end of tRNA(Asp/Asn). This Natranaerobius thermophilus (strain ATCC BAA-1301 / DSM 18059 / JW/NM-WN-LF) protein is Aspartate--tRNA(Asp/Asn) ligase.